Consider the following 79-residue polypeptide: Virulence protein MsgA (79 aa).

The protein belongs to the DinI family.

Its function is as follows. Affects survival in macrophages. This chain is Virulence protein MsgA (msgA), found in Salmonella typhi.